The primary structure comprises 400 residues: Nicotinate phosphoribosyltransferase (400 aa).

Residue histidine 220 is modified to Phosphohistidine; by autocatalysis.

This sequence belongs to the NAPRTase family. In terms of processing, transiently phosphorylated on a His residue during the reaction cycle. Phosphorylation strongly increases the affinity for substrates and increases the rate of nicotinate D-ribonucleotide production. Dephosphorylation regenerates the low-affinity form of the enzyme, leading to product release.

The enzyme catalyses nicotinate + 5-phospho-alpha-D-ribose 1-diphosphate + ATP + H2O = nicotinate beta-D-ribonucleotide + ADP + phosphate + diphosphate. It participates in cofactor biosynthesis; NAD(+) biosynthesis; nicotinate D-ribonucleotide from nicotinate: step 1/1. Catalyzes the synthesis of beta-nicotinate D-ribonucleotide from nicotinate and 5-phospho-D-ribose 1-phosphate at the expense of ATP. The sequence is that of Nicotinate phosphoribosyltransferase from Escherichia coli O45:K1 (strain S88 / ExPEC).